The sequence spans 366 residues: MTPEHLPTEQYEAQLAEKVVRLQTMMAPFAAPVPEVFRSPVSHYRMRAEFRLWHDGDDLYHIIFDQQTRSRIRVDSFPAASALINQLMTAMLEGVRNNPVLRHKLFQIDYLTTLSNQAVVSLLYHKKLDDTWREQAEALRDALRAQGLNVHLIGRATKTKIELDQDYIDERLPVGGREMIYRQVENSFTQPNAAMNIQMLEWALDVTKEATGDLLELYCGNGNFSLALARNFDRVLATEIAKPSVAAAQYNIAANHIDNVQIIRMAAEEFTQAMNGVREFNRLQGIDLQSYQCETIFVDPPRSGLDSETEKMVQAYPRILYISCNPETLCRNLETLSQTHNVTRLALFDQFPYTHHMECGVLLTRK.

S-adenosyl-L-methionine-binding residues include Q190, Y218, N223, E239, and D299. The active-site Nucleophile is the C324. Residue E358 is the Proton acceptor of the active site.

Belongs to the class I-like SAM-binding methyltransferase superfamily. RNA M5U methyltransferase family. TrmA subfamily.

It carries out the reaction uridine(54) in tRNA + S-adenosyl-L-methionine = 5-methyluridine(54) in tRNA + S-adenosyl-L-homocysteine + H(+). It catalyses the reaction uridine(341) in tmRNA + S-adenosyl-L-methionine = 5-methyluridine(341) in tmRNA + S-adenosyl-L-homocysteine + H(+). Its function is as follows. Dual-specificity methyltransferase that catalyzes the formation of 5-methyluridine at position 54 (m5U54) in all tRNAs, and that of position 341 (m5U341) in tmRNA (transfer-mRNA). The chain is tRNA/tmRNA (uracil-C(5))-methyltransferase from Klebsiella pneumoniae (strain 342).